Here is a 414-residue protein sequence, read N- to C-terminus: MENGATTTSTITIKGILSLLMESITTEEDEGGKRVISLGMGDPTLYSCFRTTQVSLQAVSDSLLSNKFHGYSPTVGLPQARRAIAEYLSRDLPYKLSQDDVFITSGCTQAIDVALSMLARPRANILLPRPGFPIYELCAKFRHLEVRYVDLLPENGWEIDLDAVEALADENTVALVVINPGNPCGNVYSYQHLMKIAESAKKLGFLVIADEVYGHLAFGSKPFVPMGVFGSIVPVLTLGSLSKRWIVPGWRLGWFVTTDPSGSFKDPKIIERFKKYFDILGGPATFIQAAVPTILEQTDESFFKKTLNSLKNSSDICCDWIKEIPCIDSSHRPEGSMAMMVKLNLSLLEDVSDDIDFCFKLAREESVILLPGTAVGLKNWLRITFAADATSIEEAFKRIKCFYLRHAKTQYPTI.

Belongs to the class-I pyridoxal-phosphate-dependent aminotransferase family. Pyridoxal 5'-phosphate is required as a cofactor.

The protein is Probable aminotransferase TAT2 of Arabidopsis thaliana (Mouse-ear cress).